A 194-amino-acid chain; its full sequence is Peptidyl-tRNA hydrolase (194 aa).

Residue tyrosine 17 participates in tRNA binding. Histidine 22 serves as the catalytic Proton acceptor. Positions 68, 70, and 116 each coordinate tRNA.

Belongs to the PTH family. In terms of assembly, monomer.

It is found in the cytoplasm. It carries out the reaction an N-acyl-L-alpha-aminoacyl-tRNA + H2O = an N-acyl-L-amino acid + a tRNA + H(+). Functionally, hydrolyzes ribosome-free peptidyl-tRNAs (with 1 or more amino acids incorporated), which drop off the ribosome during protein synthesis, or as a result of ribosome stalling. Catalyzes the release of premature peptidyl moieties from peptidyl-tRNA molecules trapped in stalled 50S ribosomal subunits, and thus maintains levels of free tRNAs and 50S ribosomes. The protein is Peptidyl-tRNA hydrolase of Histophilus somni (strain 129Pt) (Haemophilus somnus).